A 115-amino-acid polypeptide reads, in one-letter code: Cell division topological specificity factor (115 aa).

The segment at 89 to 115 (TGQIQLKEPKNQSEVDSPETEGKDQNS) is disordered.

This sequence belongs to the MinE family.

Its function is as follows. Prevents the cell division inhibition by proteins MinC and MinD at internal division sites while permitting inhibition at polar sites. This ensures cell division at the proper site by restricting the formation of a division septum at the midpoint of the long axis of the cell. The polypeptide is Cell division topological specificity factor (Prochlorococcus marinus (strain NATL2A)).